Consider the following 479-residue polypeptide: Probable polyamine transporter At3g19553 (479 aa).

Transmembrane regions (helical) follow at residues 22–42 (LTLL…PFGV), 53–73 (LLAL…EALV), 86–106 (GYVV…EGFW), 130–150 (FPVL…TFSL), 160–180 (IVGF…VVMA), 236–256 (ALFG…MAGT), 275–295 (VGML…AAMS), 304–324 (MSSD…PAFF), 332–352 (TPTI…WMSF), 355–375 (IIEF…AAFV), 395–415 (FGVS…MVLA), and 420–440 (FLIS…LTLV). The segment at 454 to 479 (RPVSGVSSESQLDEEHGDESAASLLP) is disordered.

This sequence belongs to the amino acid-polyamine-organocation (APC) superfamily. Polyamine:cation symporter (PHS) (TC 2.A.3.12) family.

It is found in the cell membrane. In terms of biological role, probable cell membrane polyamine/proton symporter involved in the polyamine uptake in cells. The polypeptide is Probable polyamine transporter At3g19553 (Arabidopsis thaliana (Mouse-ear cress)).